The following is a 231-amino-acid chain: MMTTLTARPEAITFDPQQSALIVVDMQNAYATPGGYLDLAGFDVSTTRPVIANIQTAVTAARAAGMLIIWFQNGWDEQYVEAGGPGSPNFHKSNALKTMRKQPQLQGKLLAKGSWDYQLVDELVPQPGDIVLPKPRYSGFFNTPLDSILRSRGIRHLVFTSIATNVCVESTLRDGFFLEYFGVVLEDATHQAGPEFVQKAALFNIETFFGWVSDVETFCDALSPTSFARIA.

Asp25 functions as the Proton acceptor in the catalytic mechanism. Lys134 is an active-site residue. Catalysis depends on Cys167, which acts as the Nucleophile.

The protein belongs to the isochorismatase family. RutB subfamily.

It catalyses the reaction (Z)-3-ureidoacrylate + H2O + H(+) = (Z)-3-aminoacrylate + NH4(+) + CO2. The enzyme catalyses (Z)-3-ureidoacrylate + H2O = (Z)-3-aminoacrylate + carbamate + H(+). It carries out the reaction (Z)-2-methylureidoacrylate + H2O + H(+) = (Z)-2-methylaminoacrylate + NH4(+) + CO2. Functionally, hydrolyzes ureidoacrylate to form aminoacrylate and carbamate. The carbamate hydrolyzes spontaneously, thereby releasing one of the nitrogen atoms of the pyrimidine ring as ammonia and one of its carbon atoms as CO2. This is Ureidoacrylate amidohydrolase RutB from Escherichia coli O157:H7 (strain EC4115 / EHEC).